Reading from the N-terminus, the 741-residue chain is Eukaryotic translation initiation factor 3 subunit B (741 aa).

The segment covering Met-1 to Glu-10 has biased composition (polar residues). A disordered region spans residues Met-1 to Asp-22. Residues Leu-13 to Asp-22 show a composition bias toward acidic residues. The RRM domain occupies Thr-40–Asp-126. 5 WD repeats span residues Ala-193–Gln-230, Pro-232–Val-289, Gln-303–Lys-344, Ile-514–Glu-557, and Leu-572–Ser-610. The disordered stretch occupies residues Lys-695–Glu-722.

Belongs to the eIF-3 subunit B family. Component of the eukaryotic translation initiation factor 3 (eIF-3) complex.

It localises to the cytoplasm. RNA-binding component of the eukaryotic translation initiation factor 3 (eIF-3) complex, which is involved in protein synthesis of a specialized repertoire of mRNAs and, together with other initiation factors, stimulates binding of mRNA and methionyl-tRNAi to the 40S ribosome. The eIF-3 complex specifically targets and initiates translation of a subset of mRNAs involved in cell proliferation. This Aspergillus clavatus (strain ATCC 1007 / CBS 513.65 / DSM 816 / NCTC 3887 / NRRL 1 / QM 1276 / 107) protein is Eukaryotic translation initiation factor 3 subunit B (prt1).